We begin with the raw amino-acid sequence, 603 residues long: NADH-ubiquinone oxidoreductase chain 5 (603 aa).

Transmembrane regions (helical) follow at residues 4-24 (YTTMTTLTLTPLILPILTTLI), 38-58 (SIIASTFIISLFPTTMFMCLD), 87-107 (MTFIPVALFVTWAIMEFSLWY), 122-142 (LIFLITMLILVTANNLFQLFI), 144-160 (WEGVGIMSFLLISWWYA), 171-191 (AILYNRIGDIGFILALAWFLL), 211-233 (TPLLGFLLAAAGKSAQLGLHPWL), 241-261 (TPVSALLHSSTMVVAGVFLLI), 272-292 (LIQTLTLCLGAITTLFAAICA), 301-320 (IVAFSTSSQLGLMMVTIGIN), 325-347 (AFLHICTHAFFKAMLFMCSGSII), 370-390 (STSLIIGSLALAGMPFLTGFY), 407-429 (WALSITLIATSLTSAYSTRMILL), 457-477 (LTIGSLFAGFFITNNILPMST), 482-502 (IPLYLKLTALSVTFLGLLTAL), and 583-603 (MIKLYFLSFLFPLILTLLLIM).

It belongs to the complex I subunit 5 family. As to quaternary structure, core subunit of respiratory chain NADH dehydrogenase (Complex I) which is composed of 45 different subunits.

Its subcellular location is the mitochondrion inner membrane. The catalysed reaction is a ubiquinone + NADH + 5 H(+)(in) = a ubiquinol + NAD(+) + 4 H(+)(out). Its function is as follows. Core subunit of the mitochondrial membrane respiratory chain NADH dehydrogenase (Complex I) which catalyzes electron transfer from NADH through the respiratory chain, using ubiquinone as an electron acceptor. Essential for the catalytic activity and assembly of complex I. In Pan paniscus (Pygmy chimpanzee), this protein is NADH-ubiquinone oxidoreductase chain 5 (MT-ND5).